Consider the following 432-residue polypeptide: Adenylosuccinate synthetase (432 aa).

Residues 11 to 17 (GDEGKGK) and 39 to 41 (GHT) each bind GTP. Asp12 acts as the Proton acceptor in catalysis. Residues Asp12 and Gly39 each coordinate Mg(2+). IMP is bound by residues 12–15 (DEGK), 37–40 (NAGH), Thr134, Arg148, Asn230, Thr245, and Arg309. The active-site Proton donor is His40. 305-311 (VTTGRKR) contacts substrate. Residues Arg311, 337-339 (KLD), and 419-421 (GTG) each bind GTP.

Belongs to the adenylosuccinate synthetase family. As to quaternary structure, homodimer. Requires Mg(2+) as cofactor.

Its subcellular location is the cytoplasm. It catalyses the reaction IMP + L-aspartate + GTP = N(6)-(1,2-dicarboxyethyl)-AMP + GDP + phosphate + 2 H(+). The protein operates within purine metabolism; AMP biosynthesis via de novo pathway; AMP from IMP: step 1/2. Functionally, plays an important role in the de novo pathway and in the salvage pathway of purine nucleotide biosynthesis. Catalyzes the first committed step in the biosynthesis of AMP from IMP. This Vanderwaltozyma polyspora (strain ATCC 22028 / DSM 70294 / BCRC 21397 / CBS 2163 / NBRC 10782 / NRRL Y-8283 / UCD 57-17) (Kluyveromyces polysporus) protein is Adenylosuccinate synthetase.